A 190-amino-acid chain; its full sequence is MSVPADTSPAKGPVIAVVGPSGVGKDSLMSGLAVADPRLRSMRRVITRAPEAGGEDYQPVSEAEFQALVEADVFALHWNAHGLRYGIPRDIEKLREGATGVLVNLSRAVLLQAQEVFDDFRVISVTARPEVLAARLAGRGREDAAEVERRLARASLALPEGLRQVHEVDNSGALSAAIVEAQAIIQAERA.

ATP is bound at residue 19–26 (GPSGVGKD).

It belongs to the ribose 1,5-bisphosphokinase family.

The enzyme catalyses alpha-D-ribose 1,5-bisphosphate + ATP = 5-phospho-alpha-D-ribose 1-diphosphate + ADP. It participates in metabolic intermediate biosynthesis; 5-phospho-alpha-D-ribose 1-diphosphate biosynthesis; 5-phospho-alpha-D-ribose 1-diphosphate from D-ribose 5-phosphate (route II): step 3/3. Functionally, catalyzes the phosphorylation of ribose 1,5-bisphosphate to 5-phospho-D-ribosyl alpha-1-diphosphate (PRPP). This Ruegeria sp. (strain TM1040) (Silicibacter sp.) protein is Ribose 1,5-bisphosphate phosphokinase PhnN.